Reading from the N-terminus, the 447-residue chain is Trigger factor (447 aa).

The 88-residue stretch at 174–261 (GDIAVLGFKG…LKDLKTRELP (88 aa)) folds into the PPIase FKBP-type domain.

The protein belongs to the FKBP-type PPIase family. Tig subfamily.

It localises to the cytoplasm. It catalyses the reaction [protein]-peptidylproline (omega=180) = [protein]-peptidylproline (omega=0). In terms of biological role, involved in protein export. Acts as a chaperone by maintaining the newly synthesized protein in an open conformation. Functions as a peptidyl-prolyl cis-trans isomerase. This Synechococcus sp. (strain CC9902) protein is Trigger factor.